A 261-amino-acid chain; its full sequence is Proteasome subunit alpha (261 aa).

The segment at 242–261 (NEENKKEEENREETKEKQEE) is disordered.

The protein belongs to the peptidase T1A family. In terms of assembly, the 20S proteasome core is composed of 14 alpha and 14 beta subunits that assemble into four stacked heptameric rings, resulting in a barrel-shaped structure. The two inner rings, each composed of seven catalytic beta subunits, are sandwiched by two outer rings, each composed of seven alpha subunits. The catalytic chamber with the active sites is on the inside of the barrel. Has a gated structure, the ends of the cylinder being occluded by the N-termini of the alpha-subunits. Is capped at one or both ends by the proteasome regulatory ATPase, PAN.

It is found in the cytoplasm. The formation of the proteasomal ATPase PAN-20S proteasome complex, via the docking of the C-termini of PAN into the intersubunit pockets in the alpha-rings, triggers opening of the gate for substrate entry. Interconversion between the open-gate and close-gate conformations leads to a dynamic regulation of the 20S proteasome proteolysis activity. Its function is as follows. Component of the proteasome core, a large protease complex with broad specificity involved in protein degradation. The M.jannaschii proteasome is able to cleave oligopeptides after Glu, Asp, Tyr, Phe, Trp, slightly after Arg, but not after Ala. Thus, displays caspase-like and chymotrypsin-like activities and low level of trypsin-like activity. In Methanocaldococcus jannaschii (strain ATCC 43067 / DSM 2661 / JAL-1 / JCM 10045 / NBRC 100440) (Methanococcus jannaschii), this protein is Proteasome subunit alpha.